We begin with the raw amino-acid sequence, 311 residues long: Malate dehydrogenase (311 aa).

NAD(+) is bound by residues G7–G12 and D32. 2 residues coordinate substrate: R82 and R88. NAD(+) contacts are provided by residues N95 and V118–N120. Substrate contacts are provided by N120 and R151. H175 (proton acceptor) is an active-site residue.

The protein belongs to the LDH/MDH superfamily. MDH type 3 family.

The catalysed reaction is (S)-malate + NAD(+) = oxaloacetate + NADH + H(+). Functionally, catalyzes the reversible oxidation of malate to oxaloacetate. The protein is Malate dehydrogenase of Flavobacterium johnsoniae (strain ATCC 17061 / DSM 2064 / JCM 8514 / BCRC 14874 / CCUG 350202 / NBRC 14942 / NCIMB 11054 / UW101) (Cytophaga johnsonae).